Here is a 532-residue protein sequence, read N- to C-terminus: Bone morphogenetic protein receptor type-1A (532 aa).

Residues 1–23 (MTQLYTYIRLLGACLFIISHVQG) form the signal peptide. The Extracellular segment spans residues 24-152 (QNLDSMLHGT…IGPFFDGSVR (129 aa)). 3 disulfides stabilise this stretch: cysteine 61–cysteine 82, cysteine 63–cysteine 67, and cysteine 76–cysteine 100. N-linked (GlcNAc...) asparagine glycosylation occurs at asparagine 73. Residues 107-109 (DFQ) form a mediates specificity for BMP ligand region. Cystine bridges form between cysteine 110-cysteine 124 and cysteine 125-cysteine 130. Residues 153 to 176 (WLAVLISMAVCIVAMIVFSSCFCY) traverse the membrane as a helical segment. The Cytoplasmic segment spans residues 177 to 532 (KHYCKSISSR…KMVESQDVKI (356 aa)). The GS domain occupies 204–233 (ESLKDLIDQSQSSGSGSGLPLLVQRTIAKQ). Residues 234–525 (IQMVRQVGKG…RIKKTLAKMV (292 aa)) form the Protein kinase domain. Residues 240 to 248 (VGKGRYGEV) and lysine 261 each bind ATP. Aspartate 362 serves as the catalytic Proton acceptor.

It belongs to the protein kinase superfamily. TKL Ser/Thr protein kinase family. TGFB receptor subfamily. Interacts with low affinity with GDF5; positively regulates chondrocyte differentiation. Interacts with BMP4. Interacts with SCUBE3. Interacts with TSC22D1/TSC-22. Interacts with BMP2; the interaction may induce HAMP expression. Interacts with BMP6. Interacts with heterodimers composed of BMP2 and BMP6 in vitro; the interaction may induce HAMP expression. Mg(2+) serves as cofactor. The cofactor is Mn(2+). In terms of processing, glycosylated.

It is found in the cell membrane. Its subcellular location is the cell surface. It catalyses the reaction L-threonyl-[receptor-protein] + ATP = O-phospho-L-threonyl-[receptor-protein] + ADP + H(+). The catalysed reaction is L-seryl-[receptor-protein] + ATP = O-phospho-L-seryl-[receptor-protein] + ADP + H(+). Its function is as follows. On ligand binding, forms a receptor complex consisting of two type II and two type I transmembrane serine/threonine kinases. Type II receptors phosphorylate and activate type I receptors which autophosphorylate, then bind and activate SMAD transcriptional regulators. Receptor for BMP2, BMP4, GDF5 and GDF6. Positively regulates chondrocyte differentiation through GDF5 interaction. Mediates induction of adipogenesis by GDF6. May promote the expression of HAMP, potentially via its interaction with BMP2. The chain is Bone morphogenetic protein receptor type-1A (Bmpr1a) from Rattus norvegicus (Rat).